Consider the following 229-residue polypeptide: Peroxiredoxin-like 2A (229 aa).

The tract at residues 14-112 (MWSIGVGAFG…DELGVPLYAV (99 aa)) is thioredoxin fold. Residues Cys85 and Cys88 each act as redox-active in the active site.

The protein belongs to the peroxiredoxin-like PRXL2 family. PRXL2A subfamily. In terms of tissue distribution, expressed by the principal cells of the epididymis. Detected in the head region of epididymal sperm (at protein level). Expressed in bone marrow.

It localises to the cytoplasm. The protein localises to the secreted. Its function is as follows. Involved in redox regulation of the cell. Acts as an antioxidant. Inhibits TNFSF11-induced NFKB1 and JUN activation and osteoclast differentiation. May affect bone resorption and help to maintain bone mass. Acts as a negative regulator of macrophage-mediated inflammation by inhibiting macrophage production of inflammatory cytokines, probably through suppression of the MAPK signaling pathway. This is Peroxiredoxin-like 2A from Rattus norvegicus (Rat).